The primary structure comprises 898 residues: MEELTIWEQHTATLCRDPRRGFGIAISGGRDRASGSVVVSDVVPGGPADGRLQTGDHVVMVNGVSMESVTSTFAIQILKTCTKLANITVKRPRKIQLPATKAGTSGRGRQGLEEEADCGQGYDGDTSSGSGRSWDKRSRRARTGRRNQAGSRGRRSPGGNSEANGLALVSGFKRLPRQDVHMRPVKSVLVRRTESEEFGVTLGSQIFIKHITDSGLAARNRGLQEGDLILQINGVSSENLSLSDTRRLIEKSEGKLTLLVLRDRGQFLVNIPPAVSDSDSDSSFLDDISALGSELSQAVPSHVPPPPPHAQRSLDSDGTDSPRDSPPLRRENSLDSRTISEPDAPRHSSYDIYRVPSSQSAEDRGYSPDSRVVRFHKGTTIGLRLAGGNDVGIFVSGVQEGSPADGQGIQEGDQILQVNDVPFRNLTREEAVQFLVALPPGEEVELVTQRNEDIFRKMVQSRVGDSFYIRTHFELEASPPSGLGFTRGDVFHVLDTLCPGPGPSGARGTHWLAVRMGRDLREQERGIIPNQSRAEQLASLESAQRAVGAGPGASVGSSARAEFWRLRGLRRGAKKSTQRSREDLSALTRQGHYPPYERVVLREASFKRPVVILGPVADIAMQKLTAEMPDQFGIADSVLRTDSPSKIIKLDTVRVIAEKNKHALLDVTPSAVERLNYVQYYPIVVFCAPESRAALKALRQWLAPASRRSARRLYAQAQKLRKHSEHLFTATIPLRGTSDTWYQELKAVVREQQTRPIWTAEDQLDNSSEDNLELPHRGLADSSADLSCDSRVNSDYETDGEGYTDGEGYTDVDEGPPAPALARSSEPVLEEEPRSPRDHGRASGARGAQVDRHPYHSQGRQDSMRTYGQEALKKKFTRARDVESSDEDGYDWGPATDL.

Residues 11–93 (TATLCRDPRR…LANITVKRPR (83 aa)) enclose the PDZ 1 domain. The interval 98 to 165 (PATKAGTSGR…SPGGNSEANG (68 aa)) is disordered. Ser128, Ser156, Ser161, Ser195, and Ser313 each carry phosphoserine. In terms of domain architecture, PDZ 2 spans 187-264 (SVLVRRTESE…KLTLLVLRDR (78 aa)). Residues 295–368 (LSQAVPSHVP…QSAEDRGYSP (74 aa)) are disordered. Residues 312-349 (RSLDSDGTDSPRDSPPLRRENSLDSRTISEPDAPRHSS) show a composition bias toward basic and acidic residues. At Thr319 the chain carries Phosphothreonine. Phosphoserine is present on residues Ser321 and Ser360. In terms of domain architecture, PDZ 3 spans 369–435 (DSRVVRFHKG…LTREEAVQFL (67 aa)). The 75-residue stretch at 464–538 (GDSFYIRTHF…PNQSRAEQLA (75 aa)) folds into the SH3 domain. One can recognise a Guanylate kinase-like domain in the interval 569–750 (LRRGAKKSTQ…WYQELKAVVR (182 aa)). Position 580 is a phosphoserine (Ser580). Residues 759–898 (TAEDQLDNSS…GYDWGPATDL (140 aa)) are disordered. Residues 762–772 (DQLDNSSEDNL) are compositionally biased toward acidic residues. Low complexity predominate over residues 780–790 (ADSSADLSCDS). Over residues 796–814 (YETDGEGYTDGEGYTDVDE) the composition is skewed to acidic residues. Residues 831 to 841 (EEPRSPRDHGR) are compositionally biased toward basic and acidic residues. Phosphoserine is present on residues Ser835, Ser884, and Ser885.

Belongs to the MAGUK family. Heterodimer with TJP1. Interacts with UBN1. Interacts with occludin OCLN and claudins. Interacts with PATJ. Interacts with FASLG. Interacts with CCND1. In terms of processing, phosphorylated.

The protein resides in the cell membrane. The protein localises to the cell junction. It is found in the tight junction. It localises to the nucleus. Its function is as follows. TJP1, TJP2, and TJP3 are closely related scaffolding proteins that link tight junction (TJ) transmembrane proteins such as claudins, junctional adhesion molecules, and occludin to the actin cytoskeleton. The tight junction acts to limit movement of substances through the paracellular space and as a boundary between the compositionally distinct apical and basolateral plasma membrane domains of epithelial and endothelial cells. Binds and recruits PATJ to tight junctions where it connects and stabilizes apical and lateral components of tight junctions. Promotes cell-cycle progression through the sequestration of cyclin D1 (CCND1) at tight junctions during mitosis which prevents CCND1 degradation during M-phase and enables S-phase transition. With TJP1 and TJP2, participates in the junctional retention and stability of the transcription factor DBPA, but is not involved in its shuttling to the nucleus. Contrary to TJP2, TJP3 is dispensable for individual viability, embryonic development, epithelial differentiation, and the establishment of TJs, at least in the laboratory environment. This is Tight junction protein ZO-3 (TJP3) from Canis lupus familiaris (Dog).